The chain runs to 318 residues: Biotin synthase (318 aa).

Residues 40–260 form the Radical SAM core domain; it reads DDIQKASLLS…VATARIIMPL (221 aa). Positions 55, 59, and 62 each coordinate [4Fe-4S] cluster. Positions 100, 132, 192, and 264 each coordinate [2Fe-2S] cluster.

The protein belongs to the radical SAM superfamily. Biotin synthase family. Homodimer. Requires [4Fe-4S] cluster as cofactor. [2Fe-2S] cluster serves as cofactor.

It carries out the reaction (4R,5S)-dethiobiotin + (sulfur carrier)-SH + 2 reduced [2Fe-2S]-[ferredoxin] + 2 S-adenosyl-L-methionine = (sulfur carrier)-H + biotin + 2 5'-deoxyadenosine + 2 L-methionine + 2 oxidized [2Fe-2S]-[ferredoxin]. It functions in the pathway cofactor biosynthesis; biotin biosynthesis; biotin from 7,8-diaminononanoate: step 2/2. Its function is as follows. Catalyzes the conversion of dethiobiotin (DTB) to biotin by the insertion of a sulfur atom into dethiobiotin via a radical-based mechanism. The chain is Biotin synthase from Ruegeria pomeroyi (strain ATCC 700808 / DSM 15171 / DSS-3) (Silicibacter pomeroyi).